We begin with the raw amino-acid sequence, 669 residues long: DNA ligase (669 aa).

Residues 35 to 39 (DSVYD), 84 to 85 (SL), and glutamate 116 contribute to the NAD(+) site. Lysine 118 serves as the catalytic N6-AMP-lysine intermediate. Positions 139, 176, 291, and 315 each coordinate NAD(+). Zn(2+) contacts are provided by cysteine 409, cysteine 412, cysteine 427, and cysteine 432. The region spanning 591-669 (TTKATLAGKT…EAQLLELIKA (79 aa)) is the BRCT domain.

Belongs to the NAD-dependent DNA ligase family. LigA subfamily. Mg(2+) serves as cofactor. Mn(2+) is required as a cofactor.

The catalysed reaction is NAD(+) + (deoxyribonucleotide)n-3'-hydroxyl + 5'-phospho-(deoxyribonucleotide)m = (deoxyribonucleotide)n+m + AMP + beta-nicotinamide D-nucleotide.. Its function is as follows. DNA ligase that catalyzes the formation of phosphodiester linkages between 5'-phosphoryl and 3'-hydroxyl groups in double-stranded DNA using NAD as a coenzyme and as the energy source for the reaction. It is essential for DNA replication and repair of damaged DNA. This is DNA ligase from Microcystis aeruginosa (strain NIES-843 / IAM M-2473).